Here is an 852-residue protein sequence, read N- to C-terminus: Disks large homolog 2 (852 aa).

Residues cysteine 5 and cysteine 7 are each lipidated (S-palmitoyl cysteine). Serine 28 carries the phosphoserine modification. A Phosphotyrosine modification is found at tyrosine 58. Serine 65 carries the phosphoserine modification. 2 consecutive PDZ domains span residues 98–185 and 193–280; these read EITL…RRRR and EIKL…GKPT. Phosphoserine is present on residues serine 307, serine 328, serine 360, serine 365, serine 406, and serine 414. One can recognise a PDZ 3 domain in the interval 421-502; the sequence is KVVLHKGSTG…TVTIIAQYQP (82 aa). Tyrosine 505 is subject to Phosphotyrosine. Residues serine 528, serine 530, and serine 553 each carry the phosphoserine modification. An SH3 domain is found at 536–606; sequence KRSLYVRAMF…PSKRRVERKE (71 aa). Residues 662 to 837 form the Guanylate kinase-like domain; that stretch reads TRPVIILGPM…IYNQCKLVIE (176 aa). A phosphotyrosine mark is found at tyrosine 732 and tyrosine 737.

As to quaternary structure, interacts with NOS1/nNOS through second PDZ domain. Interacts with KCNJ2/Kir2.1 (via C-terminus) through one of its PDZ domains. Interacts with KCNJ4. Interacts with FRMPD4 (via C-terminus). Interacts through its PDZ domains with NETO1. Interacts with LRFN1, LRFN2 and LRFN4. Interacts with FASLG. Interacts with KCNJ4. Interacts with ADAM22. Interacts with DGKI (via PDZ-binding motif). In terms of processing, palmitoylation of isoform 1 and isoform 2 is not required for targeting to postsynaptic density. As to expression, brain. Highest levels of isoform 1 in cortex, olfactory bulb, thalamus, hypothalamus, striatum and hippocampus. Highest level of isoform 2 in olfactory bulb. Reduced levels in cortex and hippocampus. Highest level of isoform 4 in spinal cord. Low levels of isoform 4, isoform 6, and isoform 7 in superior cervical ganglion.

It localises to the cell membrane. The protein resides in the postsynaptic density. Its subcellular location is the synapse. It is found in the membrane. The protein localises to the cell projection. It localises to the axon. The protein resides in the perikaryon. Required for perception of chronic pain through NMDA receptor signaling. Regulates surface expression of NMDA receptors in dorsal horn neurons of the spinal cord. Interacts with the cytoplasmic tail of NMDA receptor subunits as well as inward rectifying potassium channels. Involved in regulation of synaptic stability at cholinergic synapses. Part of the postsynaptic protein scaffold of excitatory synapses. The chain is Disks large homolog 2 (Dlg2) from Mus musculus (Mouse).